We begin with the raw amino-acid sequence, 188 residues long: Large ribosomal subunit protein uL10 (188 aa).

This sequence belongs to the universal ribosomal protein uL10 family. As to quaternary structure, part of the ribosomal stalk of the 50S ribosomal subunit. The N-terminus interacts with L11 and the large rRNA to form the base of the stalk. The C-terminus forms an elongated spine to which L12 dimers bind in a sequential fashion forming a multimeric L10(L12)X complex.

In terms of biological role, forms part of the ribosomal stalk, playing a central role in the interaction of the ribosome with GTP-bound translation factors. The protein is Large ribosomal subunit protein uL10 of Crocosphaera subtropica (strain ATCC 51142 / BH68) (Cyanothece sp. (strain ATCC 51142)).